The sequence spans 172 residues: Small ribosomal subunit protein bS16 (172 aa).

The segment at 125–172 is disordered; the sequence is KKRKAKEEAEAKAAAEKAAEEAAAAEAAKAEEEAAKAEEADSAEESAE. Composition is skewed to basic and acidic residues over residues 129–144 and 152–163; these read AKEEAEAKAAAEKAAE and AKAEEEAAKAEE.

It belongs to the bacterial ribosomal protein bS16 family.

The protein is Small ribosomal subunit protein bS16 of Corynebacterium aurimucosum (strain ATCC 700975 / DSM 44827 / CIP 107346 / CN-1) (Corynebacterium nigricans).